Here is a 271-residue protein sequence, read N- to C-terminus: Thiazole synthase (271 aa).

Lys-104 serves as the catalytic Schiff-base intermediate with DXP. 1-deoxy-D-xylulose 5-phosphate is bound by residues Gly-165, 192–193, and 214–215; these read AG and NT.

This sequence belongs to the ThiG family. As to quaternary structure, homotetramer. Forms heterodimers with either ThiH or ThiS.

Its subcellular location is the cytoplasm. It carries out the reaction [ThiS sulfur-carrier protein]-C-terminal-Gly-aminoethanethioate + 2-iminoacetate + 1-deoxy-D-xylulose 5-phosphate = [ThiS sulfur-carrier protein]-C-terminal Gly-Gly + 2-[(2R,5Z)-2-carboxy-4-methylthiazol-5(2H)-ylidene]ethyl phosphate + 2 H2O + H(+). It functions in the pathway cofactor biosynthesis; thiamine diphosphate biosynthesis. Functionally, catalyzes the rearrangement of 1-deoxy-D-xylulose 5-phosphate (DXP) to produce the thiazole phosphate moiety of thiamine. Sulfur is provided by the thiocarboxylate moiety of the carrier protein ThiS. In vitro, sulfur can be provided by H(2)S. The protein is Thiazole synthase of Burkholderia lata (strain ATCC 17760 / DSM 23089 / LMG 22485 / NCIMB 9086 / R18194 / 383).